Here is a 971-residue protein sequence, read N- to C-terminus: Exportin-2 (971 aa).

The residue at position 1 (methionine 1) is an N-acetylmethionine. The Importin N-terminal domain occupies 29–102 (AEKFLESVEG…KANIVHLMLS (74 aa)). The residue at position 112 (serine 112) is a Phosphoserine. N6-acetyllysine is present on residues lysine 574 and lysine 824. Serine 931 is modified (phosphoserine).

This sequence belongs to the XPO2/CSE1 family. In terms of assembly, found in a complex with CSE1L/XPO2, Ran and KPNA2. Binds with high affinity to importin-alpha only in the presence of RanGTP. The complex is dissociated by the combined action of RanBP1 and RanGAP1. Interacts with CFTR.

Its subcellular location is the cytoplasm. It localises to the nucleus. In terms of biological role, export receptor for importin-alpha. Mediates importin-alpha re-export from the nucleus to the cytoplasm after import substrates (cargos) have been released into the nucleoplasm. In the nucleus binds cooperatively to importin-alpha and to the GTPase Ran in its active GTP-bound form. Docking of this trimeric complex to the nuclear pore complex (NPC) is mediated through binding to nucleoporins. Upon transit of a nuclear export complex into the cytoplasm, disassembling of the complex and hydrolysis of Ran-GTP to Ran-GDP (induced by RANBP1 and RANGAP1, respectively) cause release of the importin-alpha from the export receptor. CSE1L/XPO2 then return to the nuclear compartment and mediate another round of transport. The directionality of nuclear export is thought to be conferred by an asymmetric distribution of the GTP- and GDP-bound forms of Ran between the cytoplasm and nucleus. This chain is Exportin-2 (CSE1L), found in Pongo abelii (Sumatran orangutan).